Consider the following 152-residue polypeptide: UPF0266 membrane protein YobD (152 aa).

The next 3 helical transmembrane spans lie at 6–26 (LVLI…QFIM), 45–65 (IDSV…VTNH), and 67–87 (AQIT…IFWI).

Belongs to the UPF0266 family.

Its subcellular location is the cell inner membrane. This chain is UPF0266 membrane protein YobD, found in Escherichia fergusonii (strain ATCC 35469 / DSM 13698 / CCUG 18766 / IAM 14443 / JCM 21226 / LMG 7866 / NBRC 102419 / NCTC 12128 / CDC 0568-73).